The chain runs to 468 residues: MFPRQILVFAALGLCFALVAGATQVSGVRRWELRRRFSFEDSFYHPPSGWESASPGEVLASRKVDVSPASIFNLGINAYQLLYRTTGLTDGEATTSVTTVLVPYNYDKDKVMVSALYEDSFSSECAPSKQLKSGHFISQNVAVAYQSLFLTTLLHEGWVVTVPDHEGPQNAFGAGPLEGHAILDAVRATINYDRIGLGSNAKVTGYGYSGGAMALGWAASLHKSYASELNVVGWAMGGTVTRMADWLRYIDGTGGAGFAVAALGGISSVDNDLQWVQDNLTPLGKIVLEKSKHSCMYKNLLEEAYKRFISDTYFQGGSTFFENSGAMYALNKYNLGEDGSKVPSAPVFMFHARNDIVVPYAMAQATARSWCQQGAQIRFTTYAGVEMGHTSAGIASLPDVLHFLRDRFNGKQWGETCQYPVVLDPWFNLFNLGESYAEFVQQLLDLLGRRIGKDDHILMAKLKKQEVP.

Positions 1–21 (MFPRQILVFAALGLCFALVAG) are cleaved as a signal peptide. Cys125 and Cys295 are disulfide-bonded. The active-site Nucleophile is the Ser209. Catalysis depends on residues Asp355 and His389.

This sequence belongs to the AB hydrolase superfamily. Lipase family. Class Lip subfamily.

Its subcellular location is the secreted. It localises to the cell wall. The catalysed reaction is a triacylglycerol + H2O = a diacylglycerol + a fatty acid + H(+). It carries out the reaction a monoacylglycerol + H2O = glycerol + a fatty acid + H(+). It catalyses the reaction a diacylglycerol + H2O = a monoacylglycerol + a fatty acid + H(+). Functionally, secreted lipase involved in Dandruff and seborrheic dermatitis (D/SD) probably via lipase-mediated breakdown of sebaceous lipids and release of irritating free fatty acids. Has triacylglycerol lipase activity and is able to hydrolyze triolein. Mostly converts monoolein to di- and triolein, while free fatty acids are only produced in low amounts. This is Secreted triacylglycerol lipase LIP7 from Malassezia globosa (strain ATCC MYA-4612 / CBS 7966) (Dandruff-associated fungus).